The primary structure comprises 348 residues: Phospho-N-acetylmuramoyl-pentapeptide-transferase (348 aa).

The next 10 membrane-spanning stretches (helical) occupy residues 11 to 31 (SWML…IFLG), 68 to 88 (AGGI…LPLG), 92 to 112 (TWLF…DDII), 128 to 148 (FVIQ…IYKG), 165 to 185 (VGHS…TIVG), 196 to 216 (LDGL…VVAL), 222 to 242 (PLAQ…FAFL), 251 to 271 (VFMG…CAVM), 276 to 296 (LLLI…ILQV), and 326 to 346 (VVAR…IAAL).

This sequence belongs to the glycosyltransferase 4 family. MraY subfamily. Mg(2+) is required as a cofactor.

It is found in the cell inner membrane. It catalyses the reaction UDP-N-acetyl-alpha-D-muramoyl-L-alanyl-gamma-D-glutamyl-meso-2,6-diaminopimeloyl-D-alanyl-D-alanine + di-trans,octa-cis-undecaprenyl phosphate = di-trans,octa-cis-undecaprenyl diphospho-N-acetyl-alpha-D-muramoyl-L-alanyl-D-glutamyl-meso-2,6-diaminopimeloyl-D-alanyl-D-alanine + UMP. It participates in cell wall biogenesis; peptidoglycan biosynthesis. In terms of biological role, catalyzes the initial step of the lipid cycle reactions in the biosynthesis of the cell wall peptidoglycan: transfers peptidoglycan precursor phospho-MurNAc-pentapeptide from UDP-MurNAc-pentapeptide onto the lipid carrier undecaprenyl phosphate, yielding undecaprenyl-pyrophosphoryl-MurNAc-pentapeptide, known as lipid I. This Chlamydia caviae (strain ATCC VR-813 / DSM 19441 / 03DC25 / GPIC) (Chlamydophila caviae) protein is Phospho-N-acetylmuramoyl-pentapeptide-transferase.